The following is a 580-amino-acid chain: Mucolipin-1 (580 aa).

The interval 1 to 38 is disordered; that stretch reads MTDPAGPRGSETERLLTPNPGYGTQVGPSPAPPTPPEE. Over 1–65 the chain is Cytoplasmic; the sequence is MTDPAGPRGS…FRAKGRKPCK (65 aa). Position 10 is a phosphoserine (serine 10). A Dileucine motif; mediates targeting to lysosomes motif is present at residues 11 to 16; the sequence is ETERLL. The tract at residues 42–62 is interaction with phosphoinositides; the sequence is RRRLKYFFMSPCDKFRAKGRK. The chain crosses the membrane as a helical span at residues 66–86; it reads LMLQVVKILVVTVQLILFGLS. The Extracellular segment spans residues 87–298; it reads NQLAVTFREE…VFRHGDNSFR (212 aa). Positions 107 to 121 are extracellular/lumenal pore loop; sequence LGYSDGADDTFAAYT. An intrachain disulfide couples cysteine 166 to cysteine 192. N-linked (GlcNAc...) asparagine glycosylation occurs at asparagine 230. A disulfide bond links cysteine 253 and cysteine 284. Residues 299–321 form a helical membrane-spanning segment; the sequence is LLFDVVVILTCSLSFLLCARSLL. The Cytoplasmic portion of the chain corresponds to 322–350; that stretch reads RGFLLQNEFVRFMWRQRRRVISLWERLEF. Residues 351–371 traverse the membrane as a helical segment; the sequence is VNGWYILLVTSDVLTISGTIM. Topologically, residues 372–382 are extracellular; the sequence is KIGIEAKNLAS. The helical transmembrane segment at 383 to 405 threads the bilayer; the sequence is YDVCSILLGTSTLLVWVGVIRYL. Residues 406–427 are Cytoplasmic-facing; sequence TFFHNYNILIATLRVALPSVMR. Residues 428–448 form a helical membrane-spanning segment; it reads FCCCVAVIYLGYCFCGWIVLG. At 449–456 the chain is on the extracellular side; it reads PYHVKFRS. Residues 457–477 constitute an intramembrane region (pore-forming); sequence LSMVSECLFSLINGDDMFVTF. The Selectivity filter signature appears at 469-474; it reads NGDDMF. The Extracellular segment spans residues 478 to 491; sequence AAMQAQQGRSSLVW. Residues 492–513 form a helical membrane-spanning segment; the sequence is LFSQLYLYSFISLFIYMVLSLF. The Cytoplasmic portion of the chain corresponds to 514 to 580; the sequence is IALITGAYDT…PSEEHSLLVN (67 aa). Phosphoserine; by PAK occurs at positions 557 and 559. The tract at residues 565-567 is required for palmitoylation and association with membranes; it reads CCC. The short motif at 573–578 is the Dileucine internalization motif; mediates AP2 complex-dependent internalization element; sequence EEHSLL.

This sequence belongs to the transient receptor (TC 1.A.4) family. Polycystin subfamily. MCOLN1 sub-subfamily. Homotetramer. Homooligomer. Can heterooligomerize with MCOLN2 or MCOLN3; heteromeric assemblies have different channel properties as compared to the respective homooligomers and may be tissue-specific. Interacts with PDCD6. Interacts with TMEM163. Interacts with LAPTM4B. Post-translationally, palmitoylated; involved in association with membranes. In terms of processing, phosphorylation by PKA inhibits channel activity. Dephosphorylation increases activity. Proteolytically cleaved probably involving multiple lysosomal proteases including cathepsin B; inhibits lysosomal channel activity.

The protein localises to the late endosome membrane. Its subcellular location is the lysosome membrane. It is found in the cytoplasmic vesicle membrane. The protein resides in the cell projection. It localises to the phagocytic cup. The protein localises to the cytoplasmic vesicle. Its subcellular location is the phagosome membrane. It is found in the cell membrane. It catalyses the reaction Ca(2+)(in) = Ca(2+)(out). It carries out the reaction Fe(2+)(in) = Fe(2+)(out). The catalysed reaction is Mg(2+)(in) = Mg(2+)(out). The enzyme catalyses K(+)(in) = K(+)(out). It catalyses the reaction Na(+)(in) = Na(+)(out). With respect to regulation, channel activity is controlled by multiple regulatory mechanisms in different subcellular compartments. Channel function is transiently modulated by changes in Ca(2+) in a pH-dependent manner; pH changes modify the aggregation state of unitary channels; a negative cooperativity between extracellular/lumenal Ca(2+) and H(+) is suggested. Regulated by phosphoinositides in a compartment-specific manner: in lysosomes activated by PtdIns(3,5)P2 (Phosphatidylinositol 3,5-bisphosphate) and at the plasma membrane inhibited by PtdIns(4,5)P2 (Phosphatidylinositol 4,5-bisphosphate). Its function is as follows. Nonselective cation channel probably playing a role in the regulation of membrane trafficking events and of metal homeostasis. Acts as a Ca(2+)-permeable cation channel with inwardly rectifying activity. Proposed to play a major role in Ca(2+) release from late endosome and lysosome vesicles to the cytoplasm, which is important for many lysosome-dependent cellular events, including the fusion and trafficking of these organelles, exocytosis and autophagy. Required for efficient uptake of large particles in macrophages in which Ca(2+) release from the lysosomes triggers lysosomal exocytosis. May also play a role in phagosome-lysosome fusion. Involved in lactosylceramide trafficking indicative for a role in the regulation of late endocytic membrane fusion/fission events. By mediating lysosomal Ca(2+) release is involved in regulation of mTORC1 signaling and in mTOR/TFEB-dependent lysosomal adaptation to environmental cues such as nutrient levels. Seems to act as lysosomal active oxygen species (ROS) sensor involved in ROS-induced TFEB activation and autophagy. Also functions as a Fe(2+) permeable channel in late endosomes and lysosomes. Also permeable to Mg(2+), Na(+). K(+) and Cs(+). Proposed to play a role in zinc homeostasis probably implicating its association with TMEM163. In adaptive immunity, TRPML2 and TRPML1 may play redundant roles in the function of the specialized lysosomes of B cells. Functionally, may contribute to cellular lipase activity within the late endosomal pathway or at the cell surface which may be involved in processes of membrane reshaping and vesiculation, especially the growth of tubular structures. However, it is not known, whether it conveys the enzymatic activity directly, or merely facilitates the activity of an associated phospholipase. The chain is Mucolipin-1 (MCOLN1) from Macaca fascicularis (Crab-eating macaque).